A 139-amino-acid polypeptide reads, in one-letter code: Small ribosomal subunit protein uS12m (139 aa).

The N-terminal 29 residues, 1–29 (MSWSGPLRGLNTSLTCGPALVPRLWATCS), are a transit peptide targeting the mitochondrion. The tract at residues 36–56 (MHRLGGPPKRPPQKLGPTEGR) is disordered.

Belongs to the universal ribosomal protein uS12 family. In terms of assembly, component of the mitochondrial ribosome small subunit (28S) which comprises a 12S rRNA and about 30 distinct proteins.

Its subcellular location is the mitochondrion. This Pongo abelii (Sumatran orangutan) protein is Small ribosomal subunit protein uS12m (MRPS12).